We begin with the raw amino-acid sequence, 416 residues long: Peroxisomal isocitrate dehydrogenase [NADP] (416 aa).

NADP(+) is bound by residues 77–79 (TIT) and R84. T79 contacts substrate. Substrate contacts are provided by residues 96–102 (SPNGTIR), R111, and R134. D253 contributes to the Mn(2+) binding site. K261 serves as a coordination point for NADP(+). Mn(2+) is bound at residue D276. Residues 311–316 (GTVTRH) and N329 each bind NADP(+). The Peroxisomal targeting signal signature appears at 414–416 (SRL).

This sequence belongs to the isocitrate and isopropylmalate dehydrogenases family. Mg(2+) is required as a cofactor. Requires Mn(2+) as cofactor.

Its subcellular location is the peroxisome. It catalyses the reaction D-threo-isocitrate + NADP(+) = 2-oxoglutarate + CO2 + NADPH. In terms of biological role, may be involved in response to oxidative stresses. The sequence is that of Peroxisomal isocitrate dehydrogenase [NADP] (ICDH) from Arabidopsis thaliana (Mouse-ear cress).